Reading from the N-terminus, the 1596-residue chain is SET-binding protein (1596 aa).

Residues 1-12 are compositionally biased toward polar residues; the sequence is MESRETLSSSRQ. Disordered stretches follow at residues 1–83, 134–426, and 475–518; these read MESR…WVAG, KQSG…SIKA, and SPSV…SRKL. The span at 64 to 81 shows a compositional bias: basic and acidic residues; that stretch reads GSGRDVDSNSNADSEKWV. The segment covering 164 to 175 has biased composition (low complexity); that stretch reads LTASDLAASDLK. Composition is skewed to polar residues over residues 213-236 and 270-282; these read KSSS…QNCF and AGNT…NNNK. A compositionally biased stretch (low complexity) spans 290-306; sequence APSPSSHSSPAPPSSSA. A compositionally biased stretch (basic and acidic residues) spans 363–372; that stretch reads DNTEGKREGY. Polar residues predominate over residues 375-395; it reads DSAQEASPARQNVSSASNPEN. The segment at residues 584–596 is a DNA-binding region (a.T hook 1); that stretch reads KKKRGRPKKQPLL. Disordered stretches follow at residues 604 to 624, 722 to 763, and 777 to 796; these read GTST…KKRK, YIGK…AVPS, and HPLS…ASTE. Residues 779-796 show a composition bias toward polar residues; the sequence is LSTQLGGSNGNLSPASTE. Position 817 is an N6-acetyllysine (Lys817). Polar residues predominate over residues 854-880; that stretch reads SPVSESHSEETIPSDSGIGTDNNSTSD. A disordered region spans residues 854 to 889; that stretch reads SPVSESHSEETIPSDSGIGTDNNSTSDQAEKSSESR. The a.T hook 2 DNA-binding region spans 1016 to 1028; sequence KKKRGRPAKTNDT. Disordered regions lie at residues 1134–1164, 1202–1225, 1245–1300, 1325–1344, 1440–1473, and 1518–1596; these read PPKV…DRIL, EKNK…SKNN, AKEK…GSKR, SSYD…KVDQ, QRQS…DQMP, and EAPP…EVLP. Positions 1146–1159 are enriched in basic residues; the sequence is RLHKRKHKHKHKHK. Positions 1450 to 1459 are enriched in basic residues; it reads VKKRRGRPRK. Positions 1451-1463 form a DNA-binding region, a.T hook 3; sequence KKRRGRPRKQPTQ. Tandem repeats lie at residues 1520-1527, 1528-1535, and 1536-1543. Residues 1520–1543 are 3 X 8 AA tandem repeats of P-P-L-P-P-P-P-P; that stretch reads PPLPPPPPPPLPPPPPPPLPPPPP. Pro residues-rich tracts occupy residues 1520–1546 and 1560–1572; these read PPLP…PLPK and PAQP…PQQP.

Interacts with SET. Expressed in numerous tissues. Expressed at low levels in myeloid and monocytic cells as well as in CD34+ cells; expression levels are higher in myeloid malignancies.

It localises to the nucleus. The protein is SET-binding protein (SETBP1) of Homo sapiens (Human).